A 273-amino-acid polypeptide reads, in one-letter code: NAD-dependent protein deacylase (273 aa).

Residues 20-272 (RERLRQRIFF…PEFVDKFLKG (253 aa)) form the Deacetylase sirtuin-type domain. 48–67 (GAGISAESGIRTFRAADGLW) contacts NAD(+). Substrate-binding residues include Tyr92 and Arg95. 129 to 132 (QNID) is a binding site for NAD(+). His147 functions as the Proton acceptor in the catalytic mechanism. The Zn(2+) site is built by Cys155 and Cys174. NAD(+)-binding positions include 214-216 (GTS), 240-242 (NLE), and Ala258.

This sequence belongs to the sirtuin family. Class III subfamily. Zn(2+) serves as cofactor.

Its subcellular location is the cytoplasm. The enzyme catalyses N(6)-acetyl-L-lysyl-[protein] + NAD(+) + H2O = 2''-O-acetyl-ADP-D-ribose + nicotinamide + L-lysyl-[protein]. It catalyses the reaction N(6)-succinyl-L-lysyl-[protein] + NAD(+) + H2O = 2''-O-succinyl-ADP-D-ribose + nicotinamide + L-lysyl-[protein]. It carries out the reaction N(6)-(2-hydroxyisobutanoyl)-L-lysyl-[protein] + NAD(+) + H2O = 2''-O-(2-hydroxyisobutanoyl)-ADP-D-ribose + nicotinamide + L-lysyl-[protein]. Functionally, NAD-dependent lysine deacetylase that specifically removes acetyl groups on target proteins. Also acts as a protein-lysine deacylase by mediating protein desuccinylation and de-2-hydroxyisobutyrylation. Modulates the activities of several proteins which are inactive in their acylated form. The polypeptide is NAD-dependent protein deacylase (Salmonella typhi).